The chain runs to 299 residues: Endonuclease 4 (299 aa).

The N-terminal stretch at 1–24 (MSSSLRQWFARVLVLTQLINGALC) is a signal peptide. Residues Trp25 and His30 each coordinate a divalent metal cation. 25–30 (WGKEGH) contributes to the substrate binding site. An intrachain disulfide couples Cys34 to Cys65. A divalent metal cation is bound by residues Asp69 and His84. Substrate is bound by residues 69-75 (DEIKHHW), 84-87 (HYVD), and 94-99 (NYEYCR). Disulfide bonds link Cys93-Cys246, Cys101-Cys111, and Cys226-Cys233. Substrate-binding residues include Asn118 and Tyr136. Asn118 carries N-linked (GlcNAc...) asparagine glycosylation. Asn137 is a glycosylation site (N-linked (GlcNAc...) asparagine). A divalent metal cation-binding residues include His147, Asp151, His157, His181, and Asp185. Residues 147 to 196 (HFIGDIHQPLHVGFLGDEGGNTITVRWYRRKTNLHHVWDNMIIESALKTY) are substrate binding. Asn198, Asn211, and Asn229 each carry an N-linked (GlcNAc...) asparagine glycan. The propeptide at 284–299 (ATLNRIFSSKPKHAGS) is removed in mature form.

The protein belongs to the nuclease type I family. In terms of assembly, monomer. Mn(2+) serves as cofactor. It depends on Ca(2+) as a cofactor.

The enzyme catalyses Endonucleolytic cleavage to 5'-phosphomononucleotide and 5'-phosphooligonucleotide end-products.. Functionally, endonuclease that can use single-stranded RNA and DNA as substrates. In contradiction with PubMed:23620482, cannot hydrolyze single-stranded DNA and does not cleave mismatches. This chain is Endonuclease 4, found in Arabidopsis thaliana (Mouse-ear cress).